The primary structure comprises 271 residues: MPASQSRARARDRNNVLNRAEFLSLNQPPKGGPEPRSSGRKASGPSAQPPPAGDGARERRQSQQLPEEDCMQLNPSFKGIAFNSLLAIDICMSKRLGVCAGRAASWASARSMVKLIGITGHGIPWIGGTILCLVKSSTLAGQEVLMNLLLALLLDIMTVAGVQKLIKRRGPYETSPSLLDYLTMDIYAFPAGHASRAAMVSKFFLSHLVLAVPLRVLLVLWALCVGLSRVMIGRHHVTDVLSGFVIGYLQFRLVELVWMPSSTCQMLISAW.

A disordered region spans residues 1 to 66; sequence MPASQSRARA…RERRQSQQLP (66 aa). Residues 1 to 112 lie on the Cytoplasmic side of the membrane; that stretch reads MPASQSRARA…AASWASARSM (112 aa). Phosphoserine is present on residues Ser43 and Ser62. Residues 70–91 are interaction with MTOR; it reads CMQLNPSFKGIAFNSLLAIDIC. A helical transmembrane segment spans residues 113–133; it reads VKLIGITGHGIPWIGGTILCL. Residues 134–141 are Extracellular-facing; it reads VKSSTLAG. The helical transmembrane segment at 142–162 threads the bilayer; sequence QEVLMNLLLALLLDIMTVAGV. The Cytoplasmic portion of the chain corresponds to 163–202; that stretch reads QKLIKRRGPYETSPSLLDYLTMDIYAFPAGHASRAAMVSK. A helical membrane pass occupies residues 203–223; that stretch reads FFLSHLVLAVPLRVLLVLWAL. The Extracellular portion of the chain corresponds to 224-239; that stretch reads CVGLSRVMIGRHHVTD. A helical transmembrane segment spans residues 240–260; it reads VLSGFVIGYLQFRLVELVWMP. Residues 261 to 271 are Cytoplasmic-facing; that stretch reads SSTCQMLISAW.

This sequence belongs to the PA-phosphatase related phosphoesterase family. In terms of assembly, homo and heterooligomer. Interacts with MTOR; controls MTOR-dependent IGF2 expression during myoblast differentiation.

It localises to the nucleus envelope. The protein localises to the endoplasmic reticulum membrane. It is found in the membrane. Its function is as follows. Plays a role as negative regulator of myoblast differentiation, in part through effects on MTOR signaling. Has no detectable enzymatic activity. The polypeptide is Inactive phospholipid phosphatase 7 (Homo sapiens (Human)).